A 359-amino-acid polypeptide reads, in one-letter code: Membrane-bound lytic murein transglycosylase C (359 aa).

A signal peptide spans 1–16 (MKKYLALALIAPLLIS). Cys-17 carries N-palmitoyl cysteine lipidation. A lipid anchor (S-diacylglycerol cysteine) is attached at Cys-17.

Belongs to the transglycosylase Slt family.

The protein localises to the cell outer membrane. It catalyses the reaction Exolytic cleavage of the (1-&gt;4)-beta-glycosidic linkage between N-acetylmuramic acid (MurNAc) and N-acetylglucosamine (GlcNAc) residues in peptidoglycan, from either the reducing or the non-reducing ends of the peptidoglycan chains, with concomitant formation of a 1,6-anhydrobond in the MurNAc residue.. In terms of biological role, murein-degrading enzyme. May play a role in recycling of muropeptides during cell elongation and/or cell division. In Escherichia coli O127:H6 (strain E2348/69 / EPEC), this protein is Membrane-bound lytic murein transglycosylase C.